The primary structure comprises 289 residues: Phosphatidylglycerol--prolipoprotein diacylglyceryl transferase (289 aa).

Transmembrane regions (helical) follow at residues 24–44 (GIAIRWYGTMYIVAFAIVYLL), 70–90 (GGVLIGGRIGYILFYGFDWFL), and 111–131 (GINGMSFHGGLIGVAIALWLF). Arg-158 serves as a coordination point for a 1,2-diacyl-sn-glycero-3-phospho-(1'-sn-glycerol). The next 2 membrane-spanning stretches (helical) occupy residues 219 to 239 (GYLSGLYLIGYGTVRFFIEFF) and 253 to 273 (FSMGQVLCFLMIAAGIGILVW).

It belongs to the Lgt family.

The protein resides in the cell inner membrane. It catalyses the reaction L-cysteinyl-[prolipoprotein] + a 1,2-diacyl-sn-glycero-3-phospho-(1'-sn-glycerol) = an S-1,2-diacyl-sn-glyceryl-L-cysteinyl-[prolipoprotein] + sn-glycerol 1-phosphate + H(+). Its pathway is protein modification; lipoprotein biosynthesis (diacylglyceryl transfer). In terms of biological role, catalyzes the transfer of the diacylglyceryl group from phosphatidylglycerol to the sulfhydryl group of the N-terminal cysteine of a prolipoprotein, the first step in the formation of mature lipoproteins. The polypeptide is Phosphatidylglycerol--prolipoprotein diacylglyceryl transferase (Chlorobaculum tepidum (strain ATCC 49652 / DSM 12025 / NBRC 103806 / TLS) (Chlorobium tepidum)).